The sequence spans 97 residues: Co-chaperonin GroES (97 aa).

Belongs to the GroES chaperonin family. Heptamer of 7 subunits arranged in a ring. Interacts with the chaperonin GroEL.

It localises to the cytoplasm. In terms of biological role, together with the chaperonin GroEL, plays an essential role in assisting protein folding. The GroEL-GroES system forms a nano-cage that allows encapsulation of the non-native substrate proteins and provides a physical environment optimized to promote and accelerate protein folding. GroES binds to the apical surface of the GroEL ring, thereby capping the opening of the GroEL channel. This is Co-chaperonin GroES from Pseudomonas aeruginosa (strain LESB58).